Consider the following 144-residue polypeptide: MAKRGGKRTVGVSYRFHVTPGIFLNSLVPVADNSGARLVRVIGVVGHYSKTVHRRIPGAGVGDMVVVVVREGKPELRKQIFRAIVVRQRRPYRRPDGTWVAFEDNAVVIVTPEGDPKGSEIHGPVAMEATLRWPTIANLASIIV.

It belongs to the universal ribosomal protein uL14 family. Part of the 50S ribosomal subunit. Forms a cluster with proteins L3 and L24e, part of which may contact the 16S rRNA in 2 intersubunit bridges.

Binds to 23S rRNA. Forms part of two intersubunit bridges in the 70S ribosome. This Pyrobaculum islandicum (strain DSM 4184 / JCM 9189 / GEO3) protein is Large ribosomal subunit protein uL14.